The primary structure comprises 224 residues: Cytidylate kinase (224 aa).

Residue 11–19 (GPAAAGKST) participates in ATP binding.

It belongs to the cytidylate kinase family. Type 1 subfamily.

The protein localises to the cytoplasm. The enzyme catalyses CMP + ATP = CDP + ADP. The catalysed reaction is dCMP + ATP = dCDP + ADP. This chain is Cytidylate kinase, found in Geobacillus thermodenitrificans (strain NG80-2).